Here is a 106-residue protein sequence, read N- to C-terminus: uORF protein (106 aa).

Residues 1-19 are compositionally biased toward basic and acidic residues; that stretch reads MDLETRVSGHEKPQRRNPE. The disordered stretch occupies residues 1-31; that stretch reads MDLETRVSGHEKPQRRNPEDPDCQYAKTRSS.

Its subcellular location is the host cytoplasm. It is found in the host cytoskeleton. Plays a role in viral replication. In Zika virus (ZIKV), this protein is uORF protein.